The chain runs to 96 residues: Large ribosomal subunit protein eL43 (96 aa).

The C4-type zinc finger occupies 39–60 (CTFCGKTATKRTCVGIWKCKKC).

The protein belongs to the eukaryotic ribosomal protein eL43 family. Component of the large ribosomal subunit. Mature ribosomes consist of a small (40S) and a large (60S) subunit. The 40S subunit contains about 32 different proteins and 1 molecule of RNA (18S). The 60S subunit contains about 42 different proteins and 3 molecules of RNA (28S, 5.8S and 5S).

Its subcellular location is the cytoplasm. Functionally, component of the ribosome, a large ribonucleoprotein complex responsible for the synthesis of proteins in the cell. The small ribosomal subunit (SSU) binds messenger RNAs (mRNAs) and translates the encoded message by selecting cognate aminoacyl-transfer RNA (tRNA) molecules. The large subunit (LSU) contains the ribosomal catalytic site termed the peptidyl transferase center (PTC), which catalyzes the formation of peptide bonds, thereby polymerizing the amino acids delivered by tRNAs into a polypeptide chain. The nascent polypeptides leave the ribosome through a tunnel in the LSU and interact with protein factors that function in enzymatic processing, targeting, and the membrane insertion of nascent chains at the exit of the ribosomal tunnel. This Plasmodium falciparum (isolate 3D7) protein is Large ribosomal subunit protein eL43.